The chain runs to 195 residues: A-type ATP synthase subunit E (195 aa).

The protein belongs to the V-ATPase E subunit family. Has multiple subunits with at least A(3), B(3), C, D, E, F, H, I and proteolipid K(x).

The protein resides in the cell membrane. In terms of biological role, component of the A-type ATP synthase that produces ATP from ADP in the presence of a proton gradient across the membrane. This Staphylothermus marinus (strain ATCC 43588 / DSM 3639 / JCM 9404 / F1) protein is A-type ATP synthase subunit E.